A 445-amino-acid polypeptide reads, in one-letter code: Enolase (445 aa).

Residues His165 and Glu174 each contribute to the substrate site. Glu217 (proton donor) is an active-site residue. Mg(2+) is bound by residues Asp252, Glu303, and Asp330. 2 residues coordinate substrate: Glu303 and Asp330. The Proton acceptor role is filled by Lys355. Residues 382-385 (SHRS) and Lys406 each bind substrate.

The protein belongs to the enolase family. In terms of assembly, homodimer. Requires Mg(2+) as cofactor.

The protein resides in the cytoplasm. It catalyses the reaction (2R)-2-phosphoglycerate = phosphoenolpyruvate + H2O. The protein operates within carbohydrate degradation; glycolysis; pyruvate from D-glyceraldehyde 3-phosphate: step 4/5. In Eimeria tenella (Coccidian parasite), this protein is Enolase (ENO).